The sequence spans 182 residues: Heat shock protein beta-2 (182 aa).

The sHSP domain occupies 55 to 163 (RAGEGGRAGA…DTEVNEVYIS (109 aa)).

It belongs to the small heat shock protein (HSP20) family. As to quaternary structure, interacts with DMPK; may enhance its kinase activity.

Its subcellular location is the cytoplasm. It is found in the nucleus. In terms of biological role, may regulate the kinase DMPK. The chain is Heat shock protein beta-2 (Hspb2) from Rattus norvegicus (Rat).